The following is a 108-amino-acid chain: uncharacterized protein (108 aa).

A signal peptide spans 1–20; the sequence is MNLKSIIFVLFIAFFAFSLA. N-linked (GlcNAc...) asparagine glycosylation is present at N39.

This sequence belongs to the Dictyostelium gerABC family.

Its subcellular location is the secreted. This is an uncharacterized protein from Dictyostelium discoideum (Social amoeba).